We begin with the raw amino-acid sequence, 193 residues long: Flagellar transcriptional regulator FlhC (193 aa).

Residues Cys138, Cys141, Cys158, and Cys161 each coordinate Zn(2+).

This sequence belongs to the FlhC family. Heterohexamer composed of two FlhC and four FlhD subunits. Each FlhC binds a FlhD dimer, forming a heterotrimer, and a hexamer assembles by dimerization of two heterotrimers. The cofactor is Zn(2+).

The protein localises to the cytoplasm. Functions in complex with FlhD as a master transcriptional regulator that regulates transcription of several flagellar and non-flagellar operons by binding to their promoter region. Activates expression of class 2 flagellar genes, including fliA, which is a flagellum-specific sigma factor that turns on the class 3 genes. Also regulates genes whose products function in a variety of physiological pathways. The sequence is that of Flagellar transcriptional regulator FlhC from Proteus mirabilis.